A 420-amino-acid chain; its full sequence is MVEKRIQPLARDAMAYVLAGGRGSRLKELTDRRAKPAVYFGGKARIIDFALSNALNSGIRRIGVATQYKAHSLIRHMQRGWNFFRPERNESFDILPASQRVSETQWYEGTADAVYQNIDIIEDYGVEYMVILAGDHVYKMDYEYMLQQHVDSGADVTIGCLEVPRMEATGFGVMHVNEKDEIFAFIEKPADPPGIPDKPDFALASMGIYVFHTKFLLDALRRDAADPTSSRDFGKDIIPYIVKNGKAVAHRFAKSCVRSDFEHEPYWRDVGTIDAYWQANIDLTAIVPELDIYDKSWPIWTYAEITPPAKFVHDDDDRRGSATSSVVSGDCIISGASLNKSLLFTGVRANSFSKLEGAVILPNVKIGRRAQLKNVVIDHGVVIPEGLVVGEDPDLDAKRFRRTESGICLITQPMIDKLDI.

Alpha-D-glucose 1-phosphate-binding positions include Y107, G172, 187 to 188 (EK), and S205.

It belongs to the bacterial/plant glucose-1-phosphate adenylyltransferase family. Homotetramer.

It carries out the reaction alpha-D-glucose 1-phosphate + ATP + H(+) = ADP-alpha-D-glucose + diphosphate. It participates in glycan biosynthesis; glycogen biosynthesis. Functionally, involved in the biosynthesis of ADP-glucose, a building block required for the elongation reactions to produce glycogen. Catalyzes the reaction between ATP and alpha-D-glucose 1-phosphate (G1P) to produce pyrophosphate and ADP-Glc. The polypeptide is Glucose-1-phosphate adenylyltransferase (Rhizobium etli (strain ATCC 51251 / DSM 11541 / JCM 21823 / NBRC 15573 / CFN 42)).